Consider the following 361-residue polypeptide: Phospho-N-acetylmuramoyl-pentapeptide-transferase (361 aa).

A run of 10 helical transmembrane segments spans residues 28–48, 74–94, 99–119, 133–153, 168–188, 203–223, 236–256, 263–283, 288–308, and 338–358; these read LAII…IKFL, TMGG…LADL, IWIT…DDYA, SKFL…EYLD, LSLD…VGSS, VPIA…GNLI, TGEL…FLWF, VFMG…ISVI, IVLA…ILQV, and KVVI…LSSL.

It belongs to the glycosyltransferase 4 family. MraY subfamily. Mg(2+) serves as cofactor.

It localises to the cell inner membrane. It carries out the reaction UDP-N-acetyl-alpha-D-muramoyl-L-alanyl-gamma-D-glutamyl-meso-2,6-diaminopimeloyl-D-alanyl-D-alanine + di-trans,octa-cis-undecaprenyl phosphate = di-trans,octa-cis-undecaprenyl diphospho-N-acetyl-alpha-D-muramoyl-L-alanyl-D-glutamyl-meso-2,6-diaminopimeloyl-D-alanyl-D-alanine + UMP. It participates in cell wall biogenesis; peptidoglycan biosynthesis. Catalyzes the initial step of the lipid cycle reactions in the biosynthesis of the cell wall peptidoglycan: transfers peptidoglycan precursor phospho-MurNAc-pentapeptide from UDP-MurNAc-pentapeptide onto the lipid carrier undecaprenyl phosphate, yielding undecaprenyl-pyrophosphoryl-MurNAc-pentapeptide, known as lipid I. The sequence is that of Phospho-N-acetylmuramoyl-pentapeptide-transferase from Rickettsia prowazekii (strain Madrid E).